The sequence spans 88 residues: Small ribosomal subunit protein bS20 (88 aa).

Belongs to the bacterial ribosomal protein bS20 family.

Binds directly to 16S ribosomal RNA. The protein is Small ribosomal subunit protein bS20 of Coprothermobacter proteolyticus (strain ATCC 35245 / DSM 5265 / OCM 4 / BT).